Here is a 214-residue protein sequence, read N- to C-terminus: Auxin-binding protein ABP20 (214 aa).

Residues M1 to A23 form the signal peptide. A disulfide bond links C29 and C44. Residues S58–K204 form the Cupin type-1 domain. N-linked (GlcNAc...) asparagine glycosylation is present at N65. H106, H108, E113, and H152 together coordinate Mn(2+).

Belongs to the germin family. In terms of assembly, interacts with ABP19.

It localises to the secreted. The protein localises to the extracellular space. It is found in the apoplast. Its subcellular location is the cell wall. Its function is as follows. Probable receptor for the plant growth-promoting hormone auxin. The chain is Auxin-binding protein ABP20 (ABP20) from Prunus persica (Peach).